The sequence spans 487 residues: GTPase Der (487 aa).

EngA-type G domains lie at 2 to 164 (KTIA…SLAK) and 203 to 374 (IAVG…QRFA). Residues 8-15 (GKPNVGKS), 55-59 (DTGGI), 116-119 (NKVD), 209-216 (GRVNVGKS), 256-260 (DTAGI), and 320-323 (NKWD) each bind GTP. Positions 375-459 (YRIPTSALND…PILLSVKGKN (85 aa)) constitute a KH-like domain. Residues 459 to 480 (NAKDEENTSAKKESPSKVSHRE) show a composition bias toward basic and acidic residues. Positions 459–487 (NAKDEENTSAKKESPSKVSHRESKNRRFV) are disordered.

This sequence belongs to the TRAFAC class TrmE-Era-EngA-EngB-Septin-like GTPase superfamily. EngA (Der) GTPase family. As to quaternary structure, associates with the 50S ribosomal subunit.

In terms of biological role, GTPase that plays an essential role in the late steps of ribosome biogenesis. The sequence is that of GTPase Der from Helicobacter hepaticus (strain ATCC 51449 / 3B1).